Reading from the N-terminus, the 342-residue chain is MLKFIQNNREITALLAVVLLFVLPGFLDRQYLSVQTLTMVYSSAQILILLAMGATLVMLTRNIDVSVGSITGMCAVLLGMLLNAGYSLPVACVATLLLGLLAGFFNGVLVAWLKIPAIVATLGTLGLYRGIMLLWTGGKWIEGLPAELKQLSAPLLFGVSAIGWLTIILVAFMAWLLAKTAFGRSFYVTGDNLQGARQLGVRTEAIRIVAFSLNGCMAALAGIVFASQIGFIPNQTGTGLEMKAIAACVLGGISLLGGSGAIIGAVLGAWFLTQIDSVLVLLRIPAWWNDFIAGMVLLAVLVFDGRLRCALERNLRRQKYARFMMPPPPVKPASSGKKREAA.

At 1–13 the chain is on the periplasmic side; sequence MLKFIQNNREITA. A helical membrane pass occupies residues 14 to 34; the sequence is LLAVVLLFVLPGFLDRQYLSV. At 35–38 the chain is on the cytoplasmic side; the sequence is QTLT. Residues 39–59 form a helical membrane-spanning segment; the sequence is MVYSSAQILILLAMGATLVML. The Periplasmic segment spans residues 60 to 69; it reads TRNIDVSVGS. A helical transmembrane segment spans residues 70-90; sequence ITGMCAVLLGMLLNAGYSLPV. The Cytoplasmic portion of the chain corresponds to 91–92; that stretch reads AC. The chain crosses the membrane as a helical span at residues 93 to 113; that stretch reads VATLLLGLLAGFFNGVLVAWL. Residue K114 is a topological domain, periplasmic. A helical transmembrane segment spans residues 115–135; that stretch reads IPAIVATLGTLGLYRGIMLLW. Over 136–154 the chain is Cytoplasmic; sequence TGGKWIEGLPAELKQLSAP. A helical transmembrane segment spans residues 155 to 175; it reads LLFGVSAIGWLTIILVAFMAW. The Periplasmic segment spans residues 176–212; the sequence is LLAKTAFGRSFYVTGDNLQGARQLGVRTEAIRIVAFS. Residues 213–233 form a helical membrane-spanning segment; that stretch reads LNGCMAALAGIVFASQIGFIP. The Cytoplasmic segment spans residues 234–251; sequence NQTGTGLEMKAIAACVLG. The helical transmembrane segment at 252–272 threads the bilayer; sequence GISLLGGSGAIIGAVLGAWFL. At 273–283 the chain is on the periplasmic side; sequence TQIDSVLVLLR. Residues 284-304 traverse the membrane as a helical segment; sequence IPAWWNDFIAGMVLLAVLVFD. Topologically, residues 305-342 are cytoplasmic; sequence GRLRCALERNLRRQKYARFMMPPPPVKPASSGKKREAA.

This sequence belongs to the binding-protein-dependent transport system permease family. AraH/RbsC subfamily. In terms of assembly, the complex is composed of two ATP-binding proteins (LsrA), two transmembrane proteins (LsrC and LsrD) and a solute-binding protein (LsrB).

It is found in the cell inner membrane. In terms of biological role, part of the ABC transporter complex LsrABCD involved in autoinducer 2 (AI-2) import. Probably responsible for the translocation of the substrate across the membrane. The polypeptide is Autoinducer 2 import system permease protein LsrC (lsrC) (Escherichia coli (strain SMS-3-5 / SECEC)).